Consider the following 462-residue polypeptide: Proteases secretion protein PrtF (462 aa).

The signal sequence occupies residues 1 to 23; that stretch reads MRRKAVLLTVVLSLSGGSAQAMG.

Belongs to the outer membrane factor (OMF) (TC 1.B.17) family.

Its subcellular location is the cell outer membrane. Its function is as follows. Involved in the secretion of proteases A, B, C and G. This Dickeya chrysanthemi (Pectobacterium chrysanthemi) protein is Proteases secretion protein PrtF (prtF).